Reading from the N-terminus, the 209-residue chain is Uracil phosphoribosyltransferase (209 aa).

Residues arginine 79, arginine 104, and 131-139 (DPMLATGGS) each bind 5-phospho-alpha-D-ribose 1-diphosphate. Residues isoleucine 194 and 199–201 (GDA) each bind uracil. Aspartate 200 is a 5-phospho-alpha-D-ribose 1-diphosphate binding site.

Belongs to the UPRTase family. The cofactor is Mg(2+).

The enzyme catalyses UMP + diphosphate = 5-phospho-alpha-D-ribose 1-diphosphate + uracil. It participates in pyrimidine metabolism; UMP biosynthesis via salvage pathway; UMP from uracil: step 1/1. Its activity is regulated as follows. Allosterically activated by GTP. Functionally, catalyzes the conversion of uracil and 5-phospho-alpha-D-ribose 1-diphosphate (PRPP) to UMP and diphosphate. In Exiguobacterium sibiricum (strain DSM 17290 / CCUG 55495 / CIP 109462 / JCM 13490 / 255-15), this protein is Uracil phosphoribosyltransferase.